We begin with the raw amino-acid sequence, 329 residues long: Adenylate isopentenyltransferase 7, mitochondrial (329 aa).

Residues 1–40 (MKFSISSLKQVQPILCFKNKLSKVNVNSFLHPKEKVIFVM) constitute a mitochondrion transit peptide. 41–48 (GATGSGKS) lines the ATP pocket.

The protein belongs to the IPP transferase family. Expressed in both the vascular stele and the phloem companion cells of the root, in endodermis of the root elongation zone, trichomes on young leaves, and some pollen tubes.

It is found in the mitochondrion. It catalyses the reaction dimethylallyl diphosphate + ADP = N(6)-(dimethylallyl)adenosine 5'-diphosphate + diphosphate. The enzyme catalyses dimethylallyl diphosphate + ATP = N(6)-(dimethylallyl)adenosine 5'-triphosphate + diphosphate. Functionally, involved in cytokinin biosynthesis. Catalyzes the transfer of an isopentenyl group from dimethylallyl diphosphate (DMAPP) to ATP and ADP. The protein is Adenylate isopentenyltransferase 7, mitochondrial (IPT7) of Arabidopsis thaliana (Mouse-ear cress).